The primary structure comprises 268 residues: Nickel import ATP-binding protein NikE (268 aa).

The 249-residue stretch at 4–252 (LNISGLSHHY…SSDAGRVLQN (249 aa)) folds into the ABC transporter domain. 45–52 (GRSGCGKS) contributes to the ATP binding site.

This sequence belongs to the ABC transporter superfamily. Nickel importer (TC 3.A.1.5.3) family. The complex is composed of two ATP-binding proteins (NikD and NikE), two transmembrane proteins (NikB and NikC) and a solute-binding protein (NikA).

The protein resides in the cell inner membrane. It catalyses the reaction Ni(2+)(out) + ATP + H2O = Ni(2+)(in) + ADP + phosphate + H(+). Part of the ABC transporter complex NikABCDE involved in nickel import. Responsible for energy coupling to the transport system. The protein is Nickel import ATP-binding protein NikE of Escherichia coli (strain K12).